The sequence spans 412 residues: Gamma-glutamyl phosphate reductase (412 aa).

It belongs to the gamma-glutamyl phosphate reductase family.

The protein resides in the cytoplasm. It carries out the reaction L-glutamate 5-semialdehyde + phosphate + NADP(+) = L-glutamyl 5-phosphate + NADPH + H(+). It participates in amino-acid biosynthesis; L-proline biosynthesis; L-glutamate 5-semialdehyde from L-glutamate: step 2/2. Its function is as follows. Catalyzes the NADPH-dependent reduction of L-glutamate 5-phosphate into L-glutamate 5-semialdehyde and phosphate. The product spontaneously undergoes cyclization to form 1-pyrroline-5-carboxylate. The protein is Gamma-glutamyl phosphate reductase of Bartonella quintana (strain Toulouse) (Rochalimaea quintana).